A 560-amino-acid polypeptide reads, in one-letter code: Dihydroxy-acid dehydratase (560 aa).

Residue Cys-50 coordinates [2Fe-2S] cluster. Asp-82 contributes to the Mg(2+) binding site. Cys-123 is a binding site for [2Fe-2S] cluster. Mg(2+) contacts are provided by Asp-124 and Lys-125. An N6-carboxylysine modification is found at Lys-125. A [2Fe-2S] cluster-binding site is contributed by Cys-195. Glu-447 lines the Mg(2+) pocket. Residue Ser-473 is the Proton acceptor of the active site.

This sequence belongs to the IlvD/Edd family. Homodimer. Requires [2Fe-2S] cluster as cofactor. Mg(2+) is required as a cofactor.

It catalyses the reaction (2R)-2,3-dihydroxy-3-methylbutanoate = 3-methyl-2-oxobutanoate + H2O. The enzyme catalyses (2R,3R)-2,3-dihydroxy-3-methylpentanoate = (S)-3-methyl-2-oxopentanoate + H2O. It participates in amino-acid biosynthesis; L-isoleucine biosynthesis; L-isoleucine from 2-oxobutanoate: step 3/4. It functions in the pathway amino-acid biosynthesis; L-valine biosynthesis; L-valine from pyruvate: step 3/4. In terms of biological role, functions in the biosynthesis of branched-chain amino acids. Catalyzes the dehydration of (2R,3R)-2,3-dihydroxy-3-methylpentanoate (2,3-dihydroxy-3-methylvalerate) into 2-oxo-3-methylpentanoate (2-oxo-3-methylvalerate) and of (2R)-2,3-dihydroxy-3-methylbutanoate (2,3-dihydroxyisovalerate) into 2-oxo-3-methylbutanoate (2-oxoisovalerate), the penultimate precursor to L-isoleucine and L-valine, respectively. The protein is Dihydroxy-acid dehydratase of Methylibium petroleiphilum (strain ATCC BAA-1232 / LMG 22953 / PM1).